The chain runs to 422 residues: Transcription termination factor Rho (422 aa).

The region spanning 52–127 (EVGGDGVLEV…TRVTKINFDD (76 aa)) is the Rho RNA-BD domain. Residues 173–178 (GKGQRG), 185–190 (RTGKTV), and Arg-216 contribute to the ATP site.

The protein belongs to the Rho family. In terms of assembly, homohexamer. The homohexamer assembles into an open ring structure.

In terms of biological role, facilitates transcription termination by a mechanism that involves Rho binding to the nascent RNA, activation of Rho's RNA-dependent ATPase activity, and release of the mRNA from the DNA template. The sequence is that of Transcription termination factor Rho from Cereibacter sphaeroides (strain ATCC 17023 / DSM 158 / JCM 6121 / CCUG 31486 / LMG 2827 / NBRC 12203 / NCIMB 8253 / ATH 2.4.1.) (Rhodobacter sphaeroides).